We begin with the raw amino-acid sequence, 262 residues long: Ribose-5-phosphate isomerase A (262 aa).

Residues 33–36 (TGST), 89–92 (DGTD), and 102–105 (KGGG) contribute to the substrate site. The active-site Proton acceptor is Glu-111. Lys-129 contributes to the substrate binding site.

Belongs to the ribose 5-phosphate isomerase family. As to quaternary structure, homodimer.

The enzyme catalyses aldehydo-D-ribose 5-phosphate = D-ribulose 5-phosphate. It participates in carbohydrate degradation; pentose phosphate pathway; D-ribose 5-phosphate from D-ribulose 5-phosphate (non-oxidative stage): step 1/1. Catalyzes the reversible conversion of ribose-5-phosphate to ribulose 5-phosphate. In Jannaschia sp. (strain CCS1), this protein is Ribose-5-phosphate isomerase A.